The sequence spans 344 residues: tRNA N6-adenosine threonylcarbamoyltransferase (344 aa).

H119 and H123 together coordinate Fe cation. Substrate is bound by residues V141–G145, D174, G187, D191, and N280. Residue D310 participates in Fe cation binding.

Belongs to the KAE1 / TsaD family. Requires Fe(2+) as cofactor.

It localises to the cytoplasm. It catalyses the reaction L-threonylcarbamoyladenylate + adenosine(37) in tRNA = N(6)-L-threonylcarbamoyladenosine(37) in tRNA + AMP + H(+). Required for the formation of a threonylcarbamoyl group on adenosine at position 37 (t(6)A37) in tRNAs that read codons beginning with adenine. Is involved in the transfer of the threonylcarbamoyl moiety of threonylcarbamoyl-AMP (TC-AMP) to the N6 group of A37, together with TsaE and TsaB. TsaD likely plays a direct catalytic role in this reaction. In Listeria innocua serovar 6a (strain ATCC BAA-680 / CLIP 11262), this protein is tRNA N6-adenosine threonylcarbamoyltransferase.